Reading from the N-terminus, the 334-residue chain is 5-formaminoimidazole-4-carboxamide-1-(beta)-D-ribofuranosyl 5'-monophosphate synthetase (334 aa).

S10, H11, S71, and H75 together coordinate 5-amino-1-(5-phospho-beta-D-ribosyl)imidazole-4-carboxamide. Residues 78–325 (IELVENMKVP…IAMEIREAIE (248 aa)) form the ATP-grasp domain. ATP contacts are provided by residues 132 to 142 (KPHGAKGGKGY), 173 to 176 (QEYV), and E204. 5-amino-1-(5-phospho-beta-D-ribosyl)imidazole-4-carboxamide is bound at residue N232. Mg(2+)-binding residues include E270 and E283.

Belongs to the phosphohexose mutase family. Homotrimer and homohexamer. The cofactor is Mg(2+). It depends on Mn(2+) as a cofactor.

It catalyses the reaction 5-amino-1-(5-phospho-beta-D-ribosyl)imidazole-4-carboxamide + formate + ATP = 5-formamido-1-(5-phospho-D-ribosyl)imidazole-4-carboxamide + ADP + phosphate. Its pathway is purine metabolism; IMP biosynthesis via de novo pathway; 5-formamido-1-(5-phospho-D-ribosyl)imidazole-4-carboxamide from 5-amino-1-(5-phospho-D-ribosyl)imidazole-4-carboxamide (formate route): step 1/1. Its function is as follows. Catalyzes the ATP- and formate-dependent formylation of 5-aminoimidazole-4-carboxamide-1-beta-d-ribofuranosyl 5'-monophosphate (AICAR) to 5-formaminoimidazole-4-carboxamide-1-beta-d-ribofuranosyl 5'-monophosphate (FAICAR) in the absence of folates. The sequence is that of 5-formaminoimidazole-4-carboxamide-1-(beta)-D-ribofuranosyl 5'-monophosphate synthetase from Pyrococcus furiosus (strain ATCC 43587 / DSM 3638 / JCM 8422 / Vc1).